A 310-amino-acid polypeptide reads, in one-letter code: Cytosolic Fe-S cluster assembly factor Nubp1 homolog (310 aa).

The [4Fe-4S] cluster site is built by Cys-9, Cys-23, Cys-26, and Cys-32. 63-70 (GKGGVGKS) serves as a coordination point for ATP. Residues Cys-240 and Cys-243 each contribute to the [4Fe-4S] cluster site.

Belongs to the Mrp/NBP35 ATP-binding proteins family. NUBP1/NBP35 subfamily. In terms of assembly, heterotetramer of 2 Nubp1 and 2 Nubp2 chains. Requires [4Fe-4S] cluster as cofactor.

Its subcellular location is the cytoplasm. In terms of biological role, component of the cytosolic iron-sulfur (Fe/S) protein assembly (CIA) machinery. Required for maturation of extramitochondrial Fe-S proteins. The Nubp1-Nubp2 heterotetramer forms a Fe-S scaffold complex, mediating the de novo assembly of an Fe-S cluster and its transfer to target apoproteins. The chain is Cytosolic Fe-S cluster assembly factor Nubp1 homolog from Drosophila virilis (Fruit fly).